Reading from the N-terminus, the 77-residue chain is Large ribosomal subunit protein eL14 (77 aa).

It belongs to the eukaryotic ribosomal protein eL14 family.

The polypeptide is Large ribosomal subunit protein eL14 (Methanococcus maripaludis (strain C6 / ATCC BAA-1332)).